The sequence spans 571 residues: Isocitrate dehydrogenase kinase/phosphatase (571 aa).

ATP-binding positions include 318–324 (APGVRGM) and lysine 339. Aspartate 374 is an active-site residue.

This sequence belongs to the AceK family.

It is found in the cytoplasm. It carries out the reaction L-seryl-[isocitrate dehydrogenase] + ATP = O-phospho-L-seryl-[isocitrate dehydrogenase] + ADP + H(+). Bifunctional enzyme which can phosphorylate or dephosphorylate isocitrate dehydrogenase (IDH) on a specific serine residue. This is a regulatory mechanism which enables bacteria to bypass the Krebs cycle via the glyoxylate shunt in response to the source of carbon. When bacteria are grown on glucose, IDH is fully active and unphosphorylated, but when grown on acetate or ethanol, the activity of IDH declines drastically concomitant with its phosphorylation. The sequence is that of Isocitrate dehydrogenase kinase/phosphatase from Pseudomonas entomophila (strain L48).